A 333-amino-acid chain; its full sequence is Adenosine deaminase (333 aa).

Zn(2+) is bound by residues H12 and H14. 3 residues coordinate substrate: H14, D16, and G170. H197 provides a ligand contact to Zn(2+). E200 acts as the Proton donor in catalysis. Residue D278 participates in Zn(2+) binding. D279 provides a ligand contact to substrate.

Belongs to the metallo-dependent hydrolases superfamily. Adenosine and AMP deaminases family. Adenosine deaminase subfamily. Zn(2+) is required as a cofactor.

It catalyses the reaction adenosine + H2O + H(+) = inosine + NH4(+). The enzyme catalyses 2'-deoxyadenosine + H2O + H(+) = 2'-deoxyinosine + NH4(+). Catalyzes the hydrolytic deamination of adenosine and 2-deoxyadenosine. This is Adenosine deaminase from Escherichia coli (strain SE11).